Here is a 141-residue protein sequence, read N- to C-terminus: Large ribosomal subunit protein uL11 (141 aa).

It belongs to the universal ribosomal protein uL11 family. In terms of assembly, part of the ribosomal stalk of the 50S ribosomal subunit. Interacts with L10 and the large rRNA to form the base of the stalk. L10 forms an elongated spine to which L12 dimers bind in a sequential fashion forming a multimeric L10(L12)X complex. One or more lysine residues are methylated.

In terms of biological role, forms part of the ribosomal stalk which helps the ribosome interact with GTP-bound translation factors. The chain is Large ribosomal subunit protein uL11 from Streptococcus sanguinis (strain SK36).